A 294-amino-acid polypeptide reads, in one-letter code: Ribosomal protein L11 methyltransferase (294 aa).

Thr-144, Gly-165, Asp-187, and Asn-229 together coordinate S-adenosyl-L-methionine.

It belongs to the methyltransferase superfamily. PrmA family.

It localises to the cytoplasm. The enzyme catalyses L-lysyl-[protein] + 3 S-adenosyl-L-methionine = N(6),N(6),N(6)-trimethyl-L-lysyl-[protein] + 3 S-adenosyl-L-homocysteine + 3 H(+). Its function is as follows. Methylates ribosomal protein L11. The polypeptide is Ribosomal protein L11 methyltransferase (Pseudomonas aeruginosa (strain LESB58)).